We begin with the raw amino-acid sequence, 730 residues long: MARGKKMVDRVSELMSQPKFIRNIGIVAHIDHGKTTLSDNLLSGAGMISEELAGRQLFMDSDAEEQARGITIDASNVSMVHEYEGQEYLINMIDTPGHVDFGGDVTRAMRAVDGAVVVVDAVEGTMPQTETVLRQALKEQVVPVLFINKVDRLINELKVDEMEMQVRLAKVIDKVNKLIKGMNEDMYNNGWKLDAAKGTVAFGSALYNWAVSAPFMQKSGVSFKDVYNKCREGDMKSLAKSSPLHAVLLDMVVKHLPDPFDAQKRRINVIWHGDKESVEGKSMLTADPNGPIAMMVTDISFDPHAGEVATGRLFSGTLRRGTELYIIGSAMKANRVQQVGIFMGPTRVEVEELPAGNIAAVTGLKDAIVGSTVTNLREMVPFEALTHYSEPVMTVAVEAKNMKDLPKLVEVLRQVAKEDPTLVITINEETGEHLISGMGELHLEIITGRIKRDKGVEIVTSEPIVVYRETATRKAGPIEGKSPNRHNRFYVELEPLDQVIVDLIRNGEVSMNQTWIERRDILVANGWEKDEAKNIKDISTTNIFIDMTKGVQYLNETMELILEGLHEALQGGPLADEPVQNMKIRLVDVKLHEDAIHRGPAQVIPAVRSAVKAGILYAGDSLLEPIQKISITVPTDQMGNATSQIQGRRGSVLDITSEGDTITVVGRVPVAELFGFSGDIRSATEGRAMWNTEFAGFEIVPNSLVKDVVIAIRKRKGLKEQMPRPEDYLA.

Residues 19 to 260 (KFIRNIGIVA…MVVKHLPDPF (242 aa)) form the tr-type G domain. GTP is bound by residues 28-35 (AHIDHGKT), 94-98 (DTPGH), and 148-151 (NKVD). H597 bears the Diphthamide mark.

It belongs to the TRAFAC class translation factor GTPase superfamily. Classic translation factor GTPase family. EF-G/EF-2 subfamily.

It localises to the cytoplasm. Its function is as follows. Catalyzes the GTP-dependent ribosomal translocation step during translation elongation. During this step, the ribosome changes from the pre-translocational (PRE) to the post-translocational (POST) state as the newly formed A-site-bound peptidyl-tRNA and P-site-bound deacylated tRNA move to the P and E sites, respectively. Catalyzes the coordinated movement of the two tRNA molecules, the mRNA and conformational changes in the ribosome. The polypeptide is Elongation factor 2 (Methanosphaerula palustris (strain ATCC BAA-1556 / DSM 19958 / E1-9c)).